We begin with the raw amino-acid sequence, 364 residues long: Carbamoyl phosphate synthase pyrimidine-specific small chain (364 aa).

Residues 1-171 (MKRRLVLENG…AYPSPGRGKR (171 aa)) form a CPSase region. Positions 45, 219, and 221 each coordinate L-glutamine. The Glutamine amidotransferase type-1 domain occupies 171–356 (RIVLVDFGMK…IEMIETTEKE (186 aa)). The active-site Nucleophile is C246. 5 residues coordinate L-glutamine: L247, Q250, N288, G290, and Y291. Residues H329 and E331 contribute to the active site.

It belongs to the CarA family. Composed of two chains; the small (or glutamine) chain promotes the hydrolysis of glutamine to ammonia, which is used by the large (or ammonia) chain to synthesize carbamoyl phosphate. Tetramer of heterodimers (alpha,beta)4. Interacts with BrxC.

It catalyses the reaction hydrogencarbonate + L-glutamine + 2 ATP + H2O = carbamoyl phosphate + L-glutamate + 2 ADP + phosphate + 2 H(+). The catalysed reaction is L-glutamine + H2O = L-glutamate + NH4(+). It participates in pyrimidine metabolism; UMP biosynthesis via de novo pathway; (S)-dihydroorotate from bicarbonate: step 1/3. Its function is as follows. Small subunit of the glutamine-dependent carbamoyl phosphate synthetase (CPSase). CPSase catalyzes the formation of carbamoyl phosphate from the ammonia moiety of glutamine, carbonate, and phosphate donated by ATP, constituting the first step of the biosynthetic pathway leading to arginine and/or urea. The small subunit (glutamine amidotransferase) binds and cleaves glutamine to supply the large subunit with the substrate ammonia. The sequence is that of Carbamoyl phosphate synthase pyrimidine-specific small chain from Bacillus subtilis (strain 168).